Reading from the N-terminus, the 991-residue chain is Mediator of RNA polymerase II transcription subunit 5 (991 aa).

The protein belongs to the Mediator complex subunit 5 family. In terms of assembly, component of the Mediator complex.

The protein resides in the nucleus. Functionally, component of the Mediator complex, a coactivator involved in the regulated transcription of nearly all RNA polymerase II-dependent genes. Mediator functions as a bridge to convey information from gene-specific regulatory proteins to the basal RNA polymerase II transcription machinery. Mediator is recruited to promoters by direct interactions with regulatory proteins and serves as a scaffold for the assembly of a functional preinitiation complex with RNA polymerase II and the general transcription factors. This chain is Mediator of RNA polymerase II transcription subunit 5 (NUT1), found in Yarrowia lipolytica (strain CLIB 122 / E 150) (Yeast).